The chain runs to 62 residues: uncharacterized protein (62 aa).

The next 2 helical transmembrane spans lie at 7-27 (LLLL…VFIA) and 34-51 (IIAS…GFTL).

Its subcellular location is the cell membrane. This is an uncharacterized protein from Bacillus subtilis (strain 168).